A 255-amino-acid polypeptide reads, in one-letter code: MKVDLNSDLGESFGRYKLGLDDEVMKYITSANVACGWHAGDPLVMRKTVRLAKKNNVQVGAHPGYPDLMGFGRRYMKLTPEEARNYILYQIGALYAFVKAEGLELQHVKPHGALYNAMVKEEDLARAVIEGILDFDKRLIVVTLAGSRVVEIAREMGARVAQEGFADRAYNPDGTLVPRSRPGAVIEDKEEIAERVISMVKDGGIRAINGEWIELEVDTICVHGDNPKAVEITAYIRRRLEEEGVKVLPMGDFIK.

The protein belongs to the LamB/PxpA family. Forms a complex composed of PxpA, PxpB and PxpC.

The enzyme catalyses 5-oxo-L-proline + ATP + 2 H2O = L-glutamate + ADP + phosphate + H(+). In terms of biological role, catalyzes the cleavage of 5-oxoproline to form L-glutamate coupled to the hydrolysis of ATP to ADP and inorganic phosphate. This chain is 5-oxoprolinase subunit A, found in Pyrococcus furiosus (strain ATCC 43587 / DSM 3638 / JCM 8422 / Vc1).